Here is a 151-residue protein sequence, read N- to C-terminus: UPF0208 membrane protein YfbV (151 aa).

2 helical membrane-spanning segments follow: residues 46–65 (FGIRFMPPLAIFTLTWQIAL) and 69–91 (LGPAVATALFACSLPMQGLWWLG).

This sequence belongs to the UPF0208 family.

The protein localises to the cell inner membrane. The polypeptide is UPF0208 membrane protein YfbV (yfbV) (Photorhabdus temperata).